Here is a 473-residue protein sequence, read N- to C-terminus: Phosphatidylserine synthase 1 (473 aa).

Residues 1–35 (MAACVGSRTLSKDDVNYRLHFRMINEQQVEDITLE) are Cytoplasmic-facing. A helical transmembrane segment spans residues 36 to 56 (FFYRPHTITLLSFTILSLMAF). At 57–72 (AFTRDDSVPEENIWRG) the chain is on the lumenal side. Residues 73-93 (ILSVIFFFLIISVLAFPNGPF) traverse the membrane as a helical segment. The Cytoplasmic segment spans residues 94–102 (TRPHPAIWR). The chain crosses the membrane as a helical span at residues 103-123 (MVFGLSVLYFLFLVFVLFLNF). The Lumenal portion of the chain corresponds to 124 to 186 (EQVKAVMYWL…AMKALLIRSY (63 aa)). The helical transmembrane segment at 187–207 (GLCWTISITWELTELFFMHLL) threads the bilayer. Residues 208–216 (PNFAECWWD) are Cytoplasmic-facing. The helical transmembrane segment at 217-237 (QVILDILLCNGGGIWLGMVVC) threads the bilayer. The Lumenal portion of the chain corresponds to 238–286 (RFLEMRTYHWASFKDIHTTTGKIKRAVLQFTPASWTYVRWFDPKSSFQR). Residues 287–307 (VAGIYLFMIIWQLTELNTFFL) traverse the membrane as a helical segment. Residues 308–319 (KHIFVFQASHPL) lie on the Cytoplasmic side of the membrane. Residues 320–342 (SWGRILFIGIITAPTVRQYYAYL) traverse the membrane as a helical segment. Residues 343–355 (TDTQCKRVGTQCW) lie on the Lumenal side of the membrane. Residues 356-376 (VFGVIAFLEAIVCIKFGQDLF) form a helical membrane-spanning segment. Over 377 to 380 (SKTQ) the chain is Cytoplasmic. A helical membrane pass occupies residues 381 to 401 (ILYVVFWLLCVAFTTFLCLYG). The Lumenal segment spans residues 402 to 473 (MVWYAEYYGH…SKVTNGIGKK (72 aa)). Residues 420-473 (EDSPYSPDASWLHSKFSKGADNSPPKHPVNSESHSSRRRNRHSRSKVTNGIGKK) form a disordered region. The span at 455-464 (SRRRNRHSRS) shows a compositional bias: basic residues.

Belongs to the phosphatidyl serine synthase family.

The protein resides in the endoplasmic reticulum membrane. The enzyme catalyses a 1,2-diacyl-sn-glycero-3-phosphoethanolamine + L-serine = a 1,2-diacyl-sn-glycero-3-phospho-L-serine + ethanolamine. It carries out the reaction a 1,2-diacyl-sn-glycero-3-phosphocholine + L-serine = a 1,2-diacyl-sn-glycero-3-phospho-L-serine + choline. It functions in the pathway phospholipid metabolism; phosphatidylserine biosynthesis. In terms of biological role, catalyzes a base-exchange reaction in which the polar head group of phosphatidylethanolamine (PE) or phosphatidylcholine (PC) is replaced by L-serine. Catalyzes mainly the conversion of phosphatidylcholine but also converts, in vitro and to a lesser extent, phosphatidylethanolamine. This is Phosphatidylserine synthase 1 (PTDSS1) from Gallus gallus (Chicken).